A 510-amino-acid chain; its full sequence is NAD(P)H-quinone oxidoreductase subunit 2 B, chloroplastic (510 aa).

The next 13 helical transmembrane spans lie at leucine 24 to leucine 44, isoleucine 57 to phenylalanine 77, isoleucine 99 to isoleucine 119, methionine 124 to cysteine 144, leucine 149 to tyrosine 169, tyrosine 183 to glycine 203, proline 227 to alanine 247, tryptophan 295 to isoleucine 315, methionine 323 to aspartate 343, glycine 347 to alanine 367, alanine 395 to phenylalanine 415, leucine 418 to leucine 438, and methionine 484 to isoleucine 504.

It belongs to the complex I subunit 2 family. NDH is composed of at least 16 different subunits, 5 of which are encoded in the nucleus.

It localises to the plastid. Its subcellular location is the chloroplast thylakoid membrane. It carries out the reaction a plastoquinone + NADH + (n+1) H(+)(in) = a plastoquinol + NAD(+) + n H(+)(out). The enzyme catalyses a plastoquinone + NADPH + (n+1) H(+)(in) = a plastoquinol + NADP(+) + n H(+)(out). NDH shuttles electrons from NAD(P)H:plastoquinone, via FMN and iron-sulfur (Fe-S) centers, to quinones in the photosynthetic chain and possibly in a chloroplast respiratory chain. The immediate electron acceptor for the enzyme in this species is believed to be plastoquinone. Couples the redox reaction to proton translocation, and thus conserves the redox energy in a proton gradient. This is NAD(P)H-quinone oxidoreductase subunit 2 B, chloroplastic from Buxus microphylla (Littleleaf boxwood).